The sequence spans 238 residues: tRNA (guanine-N(7)-)-methyltransferase (238 aa).

S-adenosyl-L-methionine-binding residues include Glu-68, Glu-93, Asp-120, and Asp-143. Residue Asp-143 is part of the active site. Residues Lys-147, Asp-179, and 216–219 (TKFE) each bind substrate.

Belongs to the class I-like SAM-binding methyltransferase superfamily. TrmB family.

It catalyses the reaction guanosine(46) in tRNA + S-adenosyl-L-methionine = N(7)-methylguanosine(46) in tRNA + S-adenosyl-L-homocysteine. It functions in the pathway tRNA modification; N(7)-methylguanine-tRNA biosynthesis. Catalyzes the formation of N(7)-methylguanine at position 46 (m7G46) in tRNA. The sequence is that of tRNA (guanine-N(7)-)-methyltransferase from Shewanella frigidimarina (strain NCIMB 400).